The chain runs to 634 residues: Proline and serine-rich protein 3 (634 aa).

5 disordered regions span residues 1 to 69 (MFPK…LIDN), 81 to 142 (FRQA…TSLA), 185 to 242 (DASS…ATLK), 368 to 455 (VPPT…FEGP), and 472 to 534 (FPDS…TAPK). Over residues 15 to 24 (RTGATRSQRP) the composition is skewed to polar residues. Low complexity-rich tracts occupy residues 40–56 (ESWPSSSWTPSPASTTE), 128–140 (VTGPSPTGVSSTS), and 185–202 (DASSSSFPISSDGLSPSS). The span at 203–215 (VTFNPDSNKSSNP) shows a compositional bias: polar residues. Residues 368–377 (VPPTSTSTTP) show a composition bias toward low complexity. A compositionally biased stretch (pro residues) spans 378–399 (APTPTPQVCIPGPPTSAPPPCA). The segment covering 436 to 448 (VSTSSHQKTTVPD) has biased composition (polar residues). The segment covering 503–515 (PESRRGSKTESRK) has biased composition (basic and acidic residues). Position 588 is a phosphoserine (Ser588).

It is found in the cytoplasm. Its subcellular location is the cytoskeleton. The protein resides in the microtubule organizing center. The protein localises to the centrosome. This chain is Proline and serine-rich protein 3 (Proser3), found in Mus musculus (Mouse).